The following is a 689-amino-acid chain: Methionine--tRNA ligase (689 aa).

The 'HIGH' region signature appears at 19–29 (PYPTGDLHIGH). Cys-150, Cys-153, Cys-162, and Cys-166 together coordinate Zn(2+). The 'KMSKS' region motif lies at 338–342 (GLSTS). Thr-341 is a binding site for ATP. A tRNA-binding domain is found at 591–689 (EFQALDLRVG…EDSEPGTKVM (99 aa)).

This sequence belongs to the class-I aminoacyl-tRNA synthetase family. MetG type 1 subfamily. Homodimer. Zn(2+) is required as a cofactor.

The protein localises to the cytoplasm. The catalysed reaction is tRNA(Met) + L-methionine + ATP = L-methionyl-tRNA(Met) + AMP + diphosphate. In terms of biological role, is required not only for elongation of protein synthesis but also for the initiation of all mRNA translation through initiator tRNA(fMet) aminoacylation. This is Methionine--tRNA ligase from Halobacterium salinarum (strain ATCC 700922 / JCM 11081 / NRC-1) (Halobacterium halobium).